The following is a 158-amino-acid chain: Transcription elongation factor GreB (158 aa).

The stretch at 53–75 (KRRLREIDRRVRFLTKRLEVLQI) forms a coiled coil.

This sequence belongs to the GreA/GreB family. GreB subfamily.

Functionally, necessary for efficient RNA polymerase transcription elongation past template-encoded arresting sites. The arresting sites in DNA have the property of trapping a certain fraction of elongating RNA polymerases that pass through, resulting in locked ternary complexes. Cleavage of the nascent transcript by cleavage factors such as GreA or GreB allows the resumption of elongation from the new 3'terminus. GreB releases sequences of up to 9 nucleotides in length. This Pasteurella multocida (strain Pm70) protein is Transcription elongation factor GreB.